A 435-amino-acid chain; its full sequence is Methylenetetrahydrofolate--tRNA-(uracil-5-)-methyltransferase TrmFO (435 aa).

Residue 9–14 (GAGLAG) coordinates FAD.

The protein belongs to the MnmG family. TrmFO subfamily. It depends on FAD as a cofactor.

The protein resides in the cytoplasm. The enzyme catalyses uridine(54) in tRNA + (6R)-5,10-methylene-5,6,7,8-tetrahydrofolate + NADH + H(+) = 5-methyluridine(54) in tRNA + (6S)-5,6,7,8-tetrahydrofolate + NAD(+). It carries out the reaction uridine(54) in tRNA + (6R)-5,10-methylene-5,6,7,8-tetrahydrofolate + NADPH + H(+) = 5-methyluridine(54) in tRNA + (6S)-5,6,7,8-tetrahydrofolate + NADP(+). Functionally, catalyzes the folate-dependent formation of 5-methyl-uridine at position 54 (M-5-U54) in all tRNAs. The sequence is that of Methylenetetrahydrofolate--tRNA-(uracil-5-)-methyltransferase TrmFO from Enterococcus faecalis (strain ATCC 700802 / V583).